We begin with the raw amino-acid sequence, 411 residues long: Putative competence-damage inducible protein (411 aa).

It belongs to the CinA family.

The polypeptide is Putative competence-damage inducible protein (Alkaliphilus metalliredigens (strain QYMF)).